A 297-amino-acid chain; its full sequence is MPALDIASAPAAVYQQQLHLPRILCLHGGGTNARIFTAQCRALRRQLTDSYRLVFADAPFLSSAGPDVTSVYGEWGPFRSWVPVPAGVDISAWAAAGAASRIDIDVEAIDECIAAAIAQDDRAGATGDWVGLLGFSQGARVAASLLYRQQKQQRMGLTSWSRGRDRKRGATSSTNYRFAVLFAGRGPLLDLGFGSGSLAGSSAASSSASASVSGSESAGEEEEDGHLLSIPTIHVHGLRDPGLEMHRDLVRSCRPSSVRIVEWEGAHRMPITTKDVGAVVAELRHLAISRKYESLRC.

Catalysis depends on Ser136, which acts as the Charge relay system. Low complexity predominate over residues 204 to 217; the sequence is ASSSASASVSGSES. The interval 204 to 226 is disordered; that stretch reads ASSSASASVSGSESAGEEEEDGH. Active-site charge relay system residues include Asp240 and His267.

Belongs to the LovG family.

Its function is as follows. Probable esterase; part of the gene cluster that mediates the biosynthesis of asperfuranone, a probable antitumor agent. The polyketide synthase afoG is responsible for producing the 3,5-dimethyloctadienone moiety from acetyl-CoA, three malonyl-CoA, and two S-adenosyl methionines (SAM). The 3,5-dimethyloctadienone moiety is then loaded onto the SAT domain of afoE and extended with four malonyl-CoA and one SAM, which leads to the formation of 2,4-dihydroxy-6-(5,7-dimethyl-2-oxo-trans-3-trans-5-nonadienyl)-3-methylbenzaldehyde (compound 2) after reductive release and aldol condensation. AfoD is the next enzyme in the biosynthesis sequence and hydroxylates the side chain at the benzylic position of compound 2. After benzylic hydroxylation, a furan ring is formed after five-member ring hemiacetal formation and water elimination. AfoF and afoC are proposed to oxidize the R-diketone proton and to reduce the unconjugated carbonyl group, respectively, to generate asperfuranone. Since no intermediates could be isolated from afoF and afoC deletants, the sequence of these two enzymes is not fully understood. Moreover, since afoC deletant still produces a small amount of asperfuranone, other endogenous oxidoreductases might catalyze the same reaction with much less efficiency. The protein is Probable esterase afoC of Emericella nidulans (strain FGSC A4 / ATCC 38163 / CBS 112.46 / NRRL 194 / M139) (Aspergillus nidulans).